A 115-amino-acid chain; its full sequence is Large ribosomal subunit protein bL19 (115 aa).

Belongs to the bacterial ribosomal protein bL19 family.

This protein is located at the 30S-50S ribosomal subunit interface and may play a role in the structure and function of the aminoacyl-tRNA binding site. This is Large ribosomal subunit protein bL19 from Lacticaseibacillus casei (strain BL23) (Lactobacillus casei).